Reading from the N-terminus, the 335-residue chain is uncharacterized protein (335 aa).

Positions 21–258 constitute an ABC transporter domain; that stretch reads VMTSDLRKVY…QNTYHVQGQN (238 aa). 60 to 67 lines the ATP pocket; the sequence is GPNGAGKT.

The protein belongs to the ABC transporter superfamily.

This is an uncharacterized protein from Nostoc sp. (strain PCC 7120 / SAG 25.82 / UTEX 2576).